The sequence spans 100 residues: Vesicle-associated membrane protein 8 (100 aa).

N-acetylmethionine is present on Met1. The Cytoplasmic segment spans residues 1 to 75; it reads MEEASEGGGN…ARKFWWKNVK (75 aa). Residues Ser5 and Ser18 each carry the phosphoserine modification. Residues 12–72 form the v-SNARE coiled-coil homology domain; sequence RVRNLQSEVE…QKVARKFWWK (61 aa). Phosphothreonine occurs at positions 28, 48, and 54. Ser55 carries the phosphoserine modification. 2 (Microbial infection) N6-stearoyl lysine lipidation sites follow: Lys64 and Lys68. The helical; Anchor for type IV membrane protein transmembrane segment at 76 to 96 threads the bilayer; it reads MIVLICVIVFIIILFIVLFAT. Topologically, residues 97-100 are vesicular; the sequence is GAFS.

This sequence belongs to the synaptobrevin family. In terms of assembly, forms a SNARE complex composed of VAMP8, SNAP29 and STX17 involved in fusion of autophagosome with lysosome. Found in a number of SNARE complexes with NAPA, SNAP23, SNAP25, STX1A, STX4, STX7, STX8 and VTI1B. Interacts with PICALM. SNARE complex formation and binding by PICALM are mutually exclusive processes for VAMP8. Interacts with SBF2/MTMR13. Interacts with RAB21 (in GTP-bound form) in response to starvation; the interaction probably regulates VAMP8 endolysosomal trafficking. Interacts with STX17; this interaction is increased in the absence of TMEM39A. Interacts with TRIM6. As to quaternary structure, (Microbial infection) The interaction with STX17 is decreased in presence of SARS coronavirus-2/SARS-CoV-2 ORF3A protein. (Microbial infection) Stearoylated By S.flexneri N-epsilon-fatty acyltransferase IcsB, thereby disrupting the host actin cytoskeleton. In terms of tissue distribution, platelets.

It is found in the lysosome membrane. The protein resides in the early endosome membrane. Its subcellular location is the late endosome membrane. It localises to the cell membrane. The protein localises to the zymogen granule membrane. Its function is as follows. SNAREs, soluble N-ethylmaleimide-sensitive factor-attachment protein receptors, are essential proteins for fusion of cellular membranes. SNAREs localized on opposing membranes assemble to form a trans-SNARE complex, an extended, parallel four alpha-helical bundle that drives membrane fusion. VAMP8 is a SNARE involved in autophagy through the direct control of autophagosome membrane fusion with the lysososome membrane via its interaction with the STX17-SNAP29 binary t-SNARE complex. Also required for dense-granule secretion in platelets. Also plays a role in regulated enzyme secretion in pancreatic acinar cells. Involved in the abscission of the midbody during cell division, which leads to completely separate daughter cells. Involved in the homotypic fusion of early and late endosomes. Also participates in the activation of type I interferon antiviral response through a TRIM6-dependent mechanism. This chain is Vesicle-associated membrane protein 8, found in Homo sapiens (Human).